Consider the following 34-residue polypeptide: Photosystem II reaction center protein T (34 aa).

The helical transmembrane segment at 3–23 (SVAYILIFTLTIGTLFFAVAF) threads the bilayer.

This sequence belongs to the PsbT family. In terms of assembly, PSII is composed of 1 copy each of membrane proteins PsbA, PsbB, PsbC, PsbD, PsbE, PsbF, PsbH, PsbI, PsbJ, PsbK, PsbL, PsbM, PsbT, PsbX, PsbY, PsbZ, Psb30/Ycf12, peripheral proteins PsbO, CyanoQ (PsbQ), PsbU, PsbV and a large number of cofactors. It forms dimeric complexes.

It is found in the cellular thylakoid membrane. Its function is as follows. Found at the monomer-monomer interface of the photosystem II (PS II) dimer, plays a role in assembly and dimerization of PSII. PSII is a light-driven water plastoquinone oxidoreductase, using light energy to abstract electrons from H(2)O, generating a proton gradient subsequently used for ATP formation. This is Photosystem II reaction center protein T from Mastigocladus laminosus (Fischerella sp.).